We begin with the raw amino-acid sequence, 284 residues long: ATP phosphoribosyltransferase (284 aa).

It belongs to the ATP phosphoribosyltransferase family. Long subfamily. Requires Mg(2+) as cofactor.

It localises to the cytoplasm. It catalyses the reaction 1-(5-phospho-beta-D-ribosyl)-ATP + diphosphate = 5-phospho-alpha-D-ribose 1-diphosphate + ATP. Its pathway is amino-acid biosynthesis; L-histidine biosynthesis; L-histidine from 5-phospho-alpha-D-ribose 1-diphosphate: step 1/9. With respect to regulation, feedback inhibited by histidine. Its function is as follows. Catalyzes the condensation of ATP and 5-phosphoribose 1-diphosphate to form N'-(5'-phosphoribosyl)-ATP (PR-ATP). Has a crucial role in the pathway because the rate of histidine biosynthesis seems to be controlled primarily by regulation of HisG enzymatic activity. The polypeptide is ATP phosphoribosyltransferase (Pseudarthrobacter chlorophenolicus (strain ATCC 700700 / DSM 12829 / CIP 107037 / JCM 12360 / KCTC 9906 / NCIMB 13794 / A6) (Arthrobacter chlorophenolicus)).